A 375-amino-acid polypeptide reads, in one-letter code: uncharacterized protein (375 aa).

The disordered stretch occupies residues 54–78; sequence EGIPPPTQSQEPLKPQENISRPIHH.

This is an uncharacterized protein from Bos taurus (Bovine).